Reading from the N-terminus, the 297-residue chain is Signal-transducing adaptor protein 1 (297 aa).

One can recognise a PH domain in the interval 25 to 121 (PLYFEGFLLV…WRGFILTVTE (97 aa)). At Y170 the chain carries Phosphotyrosine. Positions 179 to 273 (ECFYAVSRKE…GNLRPFIHSA (95 aa)) constitute an SH2 domain. Positions 271–297 (HSADDNFGQDPNIEDRSEKFKKNPHNA) are disordered.

As to quaternary structure, interacts with URI1; the interaction is phosphorylation-dependent occurs in a growth-dependent manner. Interacts with KIT and CSF1R. In terms of processing, phosphorylated on tyrosine by TEC. Phosphorylated on tyrosine by KIT. As to expression, expression restricted to the bone marrow.

Its subcellular location is the nucleus. The protein resides in the cytoplasm. It localises to the mitochondrion. Functionally, may function as an adapter molecule downstream of KIT in the proliferation or differentiation of hematopoietic stem cells. This chain is Signal-transducing adaptor protein 1 (Stap1), found in Mus musculus (Mouse).